A 101-amino-acid chain; its full sequence is NAD(P)H-quinone oxidoreductase subunit 4L, chloroplastic (101 aa).

3 helical membrane passes run 2 to 22, 32 to 52, and 61 to 81; these read MLEH…FGLI, MCLE…SHLF, and IFSI…LAIV.

The protein belongs to the complex I subunit 4L family. As to quaternary structure, NDH is composed of at least 16 different subunits, 5 of which are encoded in the nucleus.

The protein resides in the plastid. It localises to the chloroplast thylakoid membrane. It catalyses the reaction a plastoquinone + NADH + (n+1) H(+)(in) = a plastoquinol + NAD(+) + n H(+)(out). The enzyme catalyses a plastoquinone + NADPH + (n+1) H(+)(in) = a plastoquinol + NADP(+) + n H(+)(out). NDH shuttles electrons from NAD(P)H:plastoquinone, via FMN and iron-sulfur (Fe-S) centers, to quinones in the photosynthetic chain and possibly in a chloroplast respiratory chain. The immediate electron acceptor for the enzyme in this species is believed to be plastoquinone. Couples the redox reaction to proton translocation, and thus conserves the redox energy in a proton gradient. The protein is NAD(P)H-quinone oxidoreductase subunit 4L, chloroplastic of Piper cenocladum (Ant piper).